The sequence spans 178 residues: CASP-like protein 4D1 (178 aa).

Ala2 carries the N-acetylalanine modification. Over 2-14 the chain is Cytoplasmic; that stretch reads APPPPAPPSVTLR. A helical membrane pass occupies residues 15–35; it reads TVLLLLRVLTAAFLLITVVLI. Residues 36–60 are Extracellular-facing; that stretch reads STNTVTLEISSTSIKLPFNDVYAYR. The chain crosses the membrane as a helical span at residues 61–81; sequence YMLSAAVIGLVYAVVQLFLTI. Topologically, residues 82 to 97 are cytoplasmic; sequence SQFATGKTHPLTYQFD. A helical membrane pass occupies residues 98–118; the sequence is FYGDKVISYLLATGSAAGFGV. Residues 119-149 are Extracellular-facing; sequence SKDLKDTYIALIEFDSTDPVDKFFSKGYASA. A helical membrane pass occupies residues 150 to 170; the sequence is SLLLFAFVSLAVLSVFSSLAL. The Cytoplasmic portion of the chain corresponds to 171–178; the sequence is SKRPVPVS.

This sequence belongs to the Casparian strip membrane proteins (CASP) family. As to quaternary structure, homodimer and heterodimers. Expressed in the root epidermis.

The protein localises to the cell membrane. The protein is CASP-like protein 4D1 of Arabidopsis thaliana (Mouse-ear cress).